The sequence spans 228 residues: MVMRNPSALLLEQFPWQETLQWQPTPQQQEQFQRFYGALLAANQGMNLTRITAVPDFWEKHLWDSLRGILPWLQPTGETLWGAKIQQVIDIGSGGGFPGVPVAIARPDWSVTLLEATQKKVKFLHSLGSAVGLANIYPEWGRAESHGRRYDLALIRAVGDVARCCAYGLPLLRSGGILVLYRGQWSDEDTQHLETLLPRYRSRRLDIQGFTTPLSHAQRHCVYLQRQG.

S-adenosyl-L-methionine is bound by residues glycine 92, phenylalanine 97, 115-117 (EAT), 143-144 (AE), and arginine 156.

This sequence belongs to the methyltransferase superfamily. RNA methyltransferase RsmG family.

The protein resides in the cytoplasm. Functionally, specifically methylates the N7 position of a guanine in 16S rRNA. The polypeptide is Ribosomal RNA small subunit methyltransferase G (Thermosynechococcus vestitus (strain NIES-2133 / IAM M-273 / BP-1)).